A 157-amino-acid chain; its full sequence is Small ribosomal subunit protein uS7 (157 aa).

It belongs to the universal ribosomal protein uS7 family. Part of the 30S ribosomal subunit. Contacts proteins S9 and S11.

Its function is as follows. One of the primary rRNA binding proteins, it binds directly to 16S rRNA where it nucleates assembly of the head domain of the 30S subunit. Is located at the subunit interface close to the decoding center, probably blocks exit of the E-site tRNA. This Variovorax paradoxus (strain S110) protein is Small ribosomal subunit protein uS7.